The following is a 363-amino-acid chain: p21-activated protein kinase-interacting protein 1-like (363 aa).

5 WD repeats span residues 38 to 75 (AHTA…EHGA), 78 to 116 (HHNG…CQQT), 119 to 158 (AHKG…SAFI), 200 to 238 (NNPK…CVCE), and 241 to 282 (AHEN…VQTS). Positions 309-363 (KEKSNTAVTASAVKDCDRPKKKKAQNETTDKEASETQVVHKKRKPETKQKKKKPS) are disordered. Over residues 322 to 342 (KDCDRPKKKKAQNETTDKEAS) the composition is skewed to basic and acidic residues. Residues 347–363 (VHKKRKPETKQKKKKPS) are compositionally biased toward basic residues.

It is found in the nucleus. It localises to the nucleolus. Negatively regulates the PAK1 kinase. PAK1 is a member of the PAK kinase family, which has been shown to play a positive role in the regulation of signaling pathways involving MAPK8 and RELA. PAK1 exists as an inactive homodimer, which is activated by binding of small GTPases such as CDC42 to an N-terminal regulatory domain. PAK1IP1 also binds to the N-terminus of PAK1, and inhibits the specific activation of PAK1 by CDC42. May be involved in ribosomal large subunit assembly. The polypeptide is p21-activated protein kinase-interacting protein 1-like (pak1ip1) (Xenopus laevis (African clawed frog)).